The sequence spans 513 residues: CUGBP Elav-like family member 2 (513 aa).

RRM domains lie at 35–118, 127–207, and 428–506; these read IKMF…PADS, RKLF…FADT, and ANLF…LKRS.

Belongs to the CELF/BRUNOL family.

The protein localises to the nucleus. Its subcellular location is the cytoplasm. Functionally, RNA-binding protein implicated in the regulation of several post-transcriptional events. May be involved in pre-mRNA alternative splicing, mRNA translation repression and stability. In Xenopus tropicalis (Western clawed frog), this protein is CUGBP Elav-like family member 2 (celf2).